The following is a 496-amino-acid chain: Probable cytosol aminopeptidase (496 aa).

Residues Lys266 and Asp271 each coordinate Mn(2+). Lys278 is an active-site residue. Asp289, Asp348, and Glu350 together coordinate Mn(2+). Arg352 is a catalytic residue.

The protein belongs to the peptidase M17 family. It depends on Mn(2+) as a cofactor.

The protein localises to the cytoplasm. The enzyme catalyses Release of an N-terminal amino acid, Xaa-|-Yaa-, in which Xaa is preferably Leu, but may be other amino acids including Pro although not Arg or Lys, and Yaa may be Pro. Amino acid amides and methyl esters are also readily hydrolyzed, but rates on arylamides are exceedingly low.. It catalyses the reaction Release of an N-terminal amino acid, preferentially leucine, but not glutamic or aspartic acids.. Presumably involved in the processing and regular turnover of intracellular proteins. Catalyzes the removal of unsubstituted N-terminal amino acids from various peptides. The polypeptide is Probable cytosol aminopeptidase (Azotobacter vinelandii (strain DJ / ATCC BAA-1303)).